A 722-amino-acid chain; its full sequence is Pentatricopeptide repeat-containing protein At4g14820 (722 aa).

PPR repeat units follow at residues 75–109 (ESIV…GGRL), 110–140 (DQFS…AFKI), 145–175 (DPFV…MSHR), 176–210 (DVVT…NVMP), 211–245 (DEMI…DVRM), 246–276 (DTHL…MSVR), 277–307 (NLFV…TEKK), 308–342 (DLVC…GIKP), 343–377 (DVVS…GLES), 378–408 (ELSI…MPRR), 409–443 (NVVS…NVEP), 444–479 (NEVT…NITP), and 480–514 (KLEH…SNVV). A type E motif region spans residues 515-590 (IWGSLMSACR…EKGLSRIDQN (76 aa)). Positions 591 to 621 (GKSHEFLIGDKRHKQSNEIYAKLDEVVSKLK) are type E(+) motif. Positions 622–722 (LAGYVPDCGS…NGLCSCRDYW (101 aa)) are type DYW motif.

It belongs to the PPR family. PCMP-H subfamily.

The chain is Pentatricopeptide repeat-containing protein At4g14820 (PCMP-H3) from Arabidopsis thaliana (Mouse-ear cress).